Reading from the N-terminus, the 331-residue chain is UPF0329 protein ECU01_0080/ECU01_1530/ECU02_1560/ECU04_0090/ECU08_0010/ECU08_2090 (331 aa).

Basic and acidic residues predominate over residues 305 to 320 (QRSEMEKRDREQDPER). Residues 305-331 (QRSEMEKRDREQDPERRRLRARRVGSL) are disordered. The span at 321–331 (RRLRARRVGSL) shows a compositional bias: basic residues.

Belongs to the UPF0329 family.

The sequence is that of UPF0329 protein ECU01_0080/ECU01_1530/ECU02_1560/ECU04_0090/ECU08_0010/ECU08_2090 from Encephalitozoon cuniculi (strain GB-M1) (Microsporidian parasite).